The chain runs to 207 residues: MRLFVGLGNPGSKYQDNRHNIGFMVIDEIARRHGFSPWRRRFQGETADGSLDGERITLLKPLTYMNESGRAVQEAVSFYKIGHGEVAVFHDEIELPPAKLRVKVGGGIAGHNGLRSISAHIGNDYLRVRLGVGHPGVKELVHGHVLGDFAKSERPWVAALAEAVADNAGLIAKGREATFANKVHLALQARGFLDDDNKKSGADKAAK.

Residue tyrosine 14 participates in tRNA binding. The active-site Proton acceptor is the histidine 19. TRNA contacts are provided by tyrosine 64, asparagine 66, and asparagine 112.

This sequence belongs to the PTH family. Monomer.

The protein resides in the cytoplasm. The enzyme catalyses an N-acyl-L-alpha-aminoacyl-tRNA + H2O = an N-acyl-L-amino acid + a tRNA + H(+). Hydrolyzes ribosome-free peptidyl-tRNAs (with 1 or more amino acids incorporated), which drop off the ribosome during protein synthesis, or as a result of ribosome stalling. Its function is as follows. Catalyzes the release of premature peptidyl moieties from peptidyl-tRNA molecules trapped in stalled 50S ribosomal subunits, and thus maintains levels of free tRNAs and 50S ribosomes. The sequence is that of Peptidyl-tRNA hydrolase from Rhodopseudomonas palustris (strain BisB5).